The following is a 499-amino-acid chain: Laccase (499 aa).

Plastocyanin-like domains follow at residues 2–127 and 139–281; these read VGPV…FVVY and VDND…ILRY. N-linked (GlcNAc...) asparagine glycans are attached at residues asparagine 51 and asparagine 54. Positions 64, 66, 109, and 111 each coordinate Cu cation. Intrachain disulfides connect cysteine 85–cysteine 488 and cysteine 117–cysteine 205. At tyrosine 196 the chain carries 3'-nitrotyrosine. Asparagine 208, asparagine 217, asparagine 292, and asparagine 333 each carry an N-linked (GlcNAc...) asparagine glycan. The 123-residue stretch at 348–470 folds into the Plastocyanin-like 3 domain; it reads SVPVLLQILS…GGFAVVQAED (123 aa). Tyrosine 372 is subject to 3'-nitrotyrosine. The N-linked (GlcNAc...) asparagine glycan is linked to asparagine 377. Cu cation is bound by residues histidine 395, histidine 398, and histidine 400. Asparagine 416 and asparagine 436 each carry an N-linked (GlcNAc...) asparagine glycan. 4 residues coordinate Cu cation: histidine 452, cysteine 453, histidine 454, and histidine 458.

The protein belongs to the multicopper oxidase family. Cu cation serves as cofactor.

The protein resides in the secreted. The catalysed reaction is 4 hydroquinone + O2 = 4 benzosemiquinone + 2 H2O. In terms of biological role, lignin degradation and detoxification of lignin-derived products. The sequence is that of Laccase from Trametes maxima (White-rot fungus).